An 870-amino-acid polypeptide reads, in one-letter code: Breast cancer anti-estrogen resistance protein 1 (870 aa).

M1 carries the N-acetylmethionine modification. Residues 3 to 65 (HLNVLAKALY…PGNRLKILVG (63 aa)) enclose the SH3 domain. The disordered stretch occupies residues 70–156 (KPAGPGPGPP…TFSKQTPHHP (87 aa)). The span at 73–85 (GPGPGPPATPAQP) shows a compositional bias: pro residues. The span at 97 to 111 (SQYTPMLPNTYQPQP) shows a compositional bias: polar residues. Residues 115–416 (YLVPTPSKAQ…SGVYAVPPPA (302 aa)) form a substrate for kinases region. Y128 carries the post-translational modification Phosphotyrosine; by SRC. Residues S134 and S139 each carry the phosphoserine modification. Over residues 135 to 151 (PQFQSPPAKQTSTFSKQ) the composition is skewed to polar residues. Phosphotyrosine is present on Y234. Y249 bears the Phosphotyrosine; by ABL1 mark. Position 269 is a phosphothreonine (T269). S292 carries the post-translational modification Phosphoserine. Phosphotyrosine is present on residues Y362, Y372, and Y410. 3 disordered regions span residues 411–449 (AVPPPAEREAPAEGKRLSASSTGSTRSSQSASSLEVAGP), 609–658 (KATA…NSEG), and 715–734 (IDHDLANWTPAQPLAPGRTG). Positions 416 to 426 (AEREAPAEGKR) are enriched in basic and acidic residues. The segment covering 427–444 (LSASSTGSTRSSQSASSL) has biased composition (low complexity). 3 positions are modified to phosphoserine: S428, S437, and S639. Polar residues predominate over residues 626–655 (TDKTSSIQSRPLPSPPKFTSQDSPDGQYEN). The short motif at 635-643 (RPLPSPPKF) is the SH3-binding element. Residues 746 to 796 (FYLEQCEANLTTLTNAVDAFFTAVATNQPPKIFVAHSKFVILSAHKLVFIG) form a divergent helix-loop-helix motif region.

This sequence belongs to the CAS family. Forms complexes in vivo with PTK2/FAK1, adapter protein CRKL and LYN kinase. Heterodimerizes with NEDD9. Component of a complex comprised of SH2D3C, BCAR1/CAS, and CRK. Within the complex, interacts with SH2D3C (via C-terminus), and CRK. Part of a complex comprised of PTPRA, BCAR1, BCAR3 (via SH2 domain) and SRC; the formation of the complex is dependent on integrin mediated-tyrosine phosphorylation of PTPRA. Interacts with BCAR3 (via Ras-GEF domain); the interaction regulates adhesion-dependent serine phosphorylation. Interacts with SMAD2 and SMAD3. Interacts with NPHP1. Interacts with PTK2B/PYK2. Interacts (via C-terminus) with SH2D3C/CHAT isoform 2 (via C-terminus). Interacts with activated CSPG4. Interacts with BMX, INPPL1/SHIP2 and PEAK1. Part of a collagen-stimulated complex involved in cell migration made of CDC42, CRK, TNK2 and BCAR1/p130cas. Interacts with TNK2 via SH3 domains. Interacts (when tyrosine-phosphorylated) with tensin TNS1; the interaction is increased by phosphorylation of TNS1. In terms of processing, PTK2/FAK1 activation mediates phosphorylation at the YDYVHL motif; phosphorylation is most likely catalyzed by SRC family members. SRC-family kinases are recruited to the phosphorylated sites and can phosphorylate other tyrosine residues. Tyrosine phosphorylation is triggered by integrin-mediated adhesion of cells to the extracellular matrix. Post-translationally, dephosphorylated by PTPN14 at Tyr-128. Phosphorylated by SRC kinase in a EDN1- and PTK2B-mediated manner; phosphorylation strengthens its interaction with BCAR3 as part of the PTK2B/BCAR1/BCAR3/RAP1 signaling pathway. As to expression, expressed in B-cells (at protein level). Widely expressed with an abundant expression in the testis. Low level of expression seen in the liver, thymus, and peripheral blood leukocytes.

The protein localises to the cell junction. It localises to the focal adhesion. Its subcellular location is the cytoplasm. The protein resides in the cell projection. It is found in the axon. In terms of biological role, docking protein which plays a central coordinating role for tyrosine kinase-based signaling related to cell adhesion. Implicated in induction of cell migration and cell branching. Involved in the BCAR3-mediated inhibition of TGFB signaling. The polypeptide is Breast cancer anti-estrogen resistance protein 1 (BCAR1) (Homo sapiens (Human)).